Here is a 247-residue protein sequence, read N- to C-terminus: Opacity protein opA52 (247 aa).

A signal peptide is located at residue Ala-1.

This sequence belongs to the opacity porin family.

The protein localises to the cell outer membrane. Its function is as follows. Implicated in a number of adherence functions. OPA proteins are implicated in pathogenesis and are subject to phase variation. The protein is Opacity protein opA52 (opaG) of Neisseria gonorrhoeae.